We begin with the raw amino-acid sequence, 107 residues long: Rhodocoxin (107 aa).

A 2Fe-2S ferredoxin-type domain is found at 2-106 (PTVTYVHPDG…GLIVRLPEEQ (105 aa)). [2Fe-2S] cluster is bound by residues Cys-40, Cys-46, Cys-49, and Cys-87.

It belongs to the adrenodoxin/putidaredoxin family. It depends on [2Fe-2S] cluster as a cofactor.

Ferredoxin-type protein which transfers electrons from rhodocoxin reductase to cytochrome CYP116 (ThcB), which is involved in the degradation of thiocarbamate herbicides. The sequence is that of Rhodocoxin (thcC) from Rhodococcus erythropolis (Arthrobacter picolinophilus).